The primary structure comprises 132 residues: Small ribosomal subunit protein uS8 (132 aa).

The protein belongs to the universal ribosomal protein uS8 family. In terms of assembly, part of the 30S ribosomal subunit. Contacts proteins S5 and S12.

Functionally, one of the primary rRNA binding proteins, it binds directly to 16S rRNA central domain where it helps coordinate assembly of the platform of the 30S subunit. In Christiangramia forsetii (strain DSM 17595 / CGMCC 1.15422 / KT0803) (Gramella forsetii), this protein is Small ribosomal subunit protein uS8.